The primary structure comprises 98 residues: Defensin-A1 (98 aa).

The signal sequence occupies residues 1–19 (MQTLSFLLALLFLVAQTPA). Residues 20–62 (QPTGEGEKGGTIQEPEATEAQDTAAVLMAAGAADGDDSDTKQL) constitute a propeptide that is removed on maturation. 3 disulfide bridges follow: Cys67–Cys94, Cys69–Cys83, and Cys73–Cys93. The propeptide occupies 97 to 98 (IK).

It belongs to the alpha-defensin family. As to expression, highly expressed in intestine, and expressed at lower levels in lung and spleen.

It localises to the secreted. Has antimicrobial activity. In Ornithorhynchus anatinus (Duckbill platypus), this protein is Defensin-A1.